The following is a 515-amino-acid chain: Ribosome assembly protein 4 (515 aa).

Positions 20–128 are interaction with MDN1; the sequence is REVAIIPKDL…LLYTPRAVFK (109 aa). Positions 29-125 are ubiquitin-like (UBL) domain; the sequence is LPNVSIKFQA…QITLLYTPRA (97 aa). WD repeat units follow at residues 141–181, 184–223, 227–273, 276–314, 352–396, 400–439, 442–481, and 484–515; these read GHGS…PMHT, GHYN…CLGD, GHSK…CQYT, GHTN…RCIN, AQKK…KPIA, GHQK…FIST, GHVA…LSVD, and GHKD…LWTH.

The protein belongs to the NLE1/RSA4 family. In terms of assembly, associates with the pre-60S ribosomal particle. Interacts (via WD repeats) with uL18 (RPL5). Interacts (via UBL domain) with MDN1 (via VWFA/MIDAS domain). Interacts (via WD repeats) with NSA2.

Its subcellular location is the nucleus. The protein localises to the nucleolus. In terms of biological role, involved in ribosome biogenesis. Required for processing and efficient intra-nuclear transport of pre-60S ribosomal subunits. Interacts with the AAA-ATPase Midasin (MDN1/REA1), which is essential for the ATP-dependent dissociation of a group of nonribosomal factors from the pre-60S particle. The chain is Ribosome assembly protein 4 from Saccharomyces cerevisiae (strain ATCC 204508 / S288c) (Baker's yeast).